A 427-amino-acid chain; its full sequence is Inward rectifier potassium channel 2 (427 aa).

The Cytoplasmic portion of the chain corresponds to Met-1 to Trp-81. Cys-76 bears the S-nitrosocysteine mark. The helical transmembrane segment at Arg-82–Ile-106 threads the bilayer. The Extracellular portion of the chain corresponds to Ala-107–Ser-128. The helical; Pore-forming intramembrane region spans Phe-129–Gln-140. The pore-forming intramembrane region spans Thr-141–Phe-147. The Selectivity filter motif lies at Thr-142 to Phe-147. Over Arg-148 to Val-156 the chain is Extracellular. The helical transmembrane segment at Ala-157–Ala-178 threads the bilayer. Residues Val-179–Ile-427 are Cytoplasmic-facing. The interval Ala-181 to Leu-208 is polyphosphoinositide (PIP2)-binding. The tract at residues Ser-384–Ile-427 is disordered. The short motif at Ser-425–Ile-427 is the PDZ-binding element.

Belongs to the inward rectifier-type potassium channel (TC 1.A.2.1) family. KCNJ2 subfamily. Homotetramer. Homomultimeric and heteromultimeric association with KCNJ4/Kir2.3. Can form heteromeric channels with Kir2.6/KCNJ18. Associates, via its PDZ-recognition domain, with a complex containing LIN7A, LIN7B, LIN7C, DLG1, CASK and APBA1. In terms of processing, S-nitrosylation increases the open probability and inward rectifying currents. As to expression, highly expressed in the ventricle and skeletal muscle, moderately in cerebrum and cerebellum. Only low levels are detected in kidney or lung.

It is found in the cell membrane. The protein localises to the sarcolemma. Its subcellular location is the T-tubule. It carries out the reaction K(+)(in) = K(+)(out). Activated by phosphatidylinositol 4,5 biphosphate (PtdIns(4,5)P2). Inward rectifier potassium channels are characterized by a greater tendency to allow potassium to flow into the cell rather than out of it. Their voltage dependence is regulated by the concentration of extracellular potassium; as external potassium is raised, the voltage range of the channel opening shifts to more positive voltages. The inward rectification is mainly due to the blockage of outward current by internal magnesium. Can be blocked by extracellular barium and cesium. Probably participates in establishing action potential waveform and excitability of neuronal and muscle tissues. The sequence is that of Inward rectifier potassium channel 2 (KCNJ2) from Oryctolagus cuniculus (Rabbit).